Here is a 741-residue protein sequence, read N- to C-terminus: MKTISILAFLVLARLIEANDLFQVKTIIDYQDLYLHINPNNFQVKLSHSSTDVFEFDESSNKLFCAGTNDIITYNKENCPYLMKFADESSSSVLGWSLDRQTLRFDHDLYFCGTKPPYSLLADPSGSANCRKLNIFRTVLEPKVEKEEEEEEYDGEEDDDDESLTEFESSTDFPTMTDESTEVEPSTTTESAISTTETSKDEESSTTVESTTTPKTTTTTSADSVTTTSKSNESLTTTESNESSTTTESKDSSTTTDESTPESSTTETDKTETTIEEQEEESTTSSQSEETEGPSGGNVDSTVAMVISAMFQGDRVYFYSDDKYITLLNGDLATFKIDDGYLQVNNNKWVNVNIERLLELVDNQEDATQGWIINDEGIFLVQDGFYSDSVSFSACGHDSGYRVYLGEENGCEPLNQFRIMNIEEDEIDETETTESTKTTETTKTTGPAETTDSAESTDDSNESSAPPPTEDPSDIPSATTTDEATVDPSDEQSIAPTSEPIDESTESEEPNESVTVTGDTTTDTSEQGLTTFTTETTATVTDCEDGDDSCTPRTTIRSTVITTHCPIVTKTEVETIVTDLTITLTTCIDETICEATTFVVSTTVVTTTLTTHSVVTEYVSSAHEGDGSSTIANEDKHNDAIVTPQETVAPDTNSPDADQEQPDSVEPDNETTDAPINVEDDATALISDEDTTTSTITTLIYITQSGDQPIKTPVPIFDNAANLAGSISLSSGVLLLILMLI.

An N-terminal signal peptide occupies residues 1–18 (MKTISILAFLVLARLIEA). 3 disordered regions span residues 142-300 (PKVE…GNVD), 423-528 (EEDE…SEQG), and 646-681 (ETVAPDTNSPDADQEQPDSVEPDNETTDAPINVEDD). Acidic residues predominate over residues 147 to 165 (EEEEEEYDGEEDDDDESLT). Composition is skewed to low complexity over residues 183–197 (VEPSTTTESAISTTE) and 205–266 (STTV…SSTT). N-linked (GlcNAc...) asparagine glycosylation is found at asparagine 232 and asparagine 241. Over residues 423 to 432 (EEDEIDETET) the composition is skewed to acidic residues. Over residues 433 to 451 (TESTKTTETTKTTGPAETT) the composition is skewed to low complexity. Residues asparagine 461 and asparagine 511 are each glycosylated (N-linked (GlcNAc...) asparagine). Over residues 500–511 (PIDESTESEEPN) the composition is skewed to acidic residues. Low complexity predominate over residues 512–528 (ESVTVTGDTTTDTSEQG). Residues 646–656 (ETVAPDTNSPD) are compositionally biased toward polar residues. The span at 657–671 (ADQEQPDSVEPDNET) shows a compositional bias: acidic residues. Residue asparagine 669 is glycosylated (N-linked (GlcNAc...) asparagine). Asparagine 719 carries GPI-anchor amidated asparagine lipidation. Residues 720–741 (AANLAGSISLSSGVLLLILMLI) constitute a propeptide, removed in mature form.

Its subcellular location is the cell membrane. This is an uncharacterized protein from Candida albicans (strain SC5314 / ATCC MYA-2876) (Yeast).